A 345-amino-acid polypeptide reads, in one-letter code: Peptidoglycan-recognition protein LE (345 aa).

Positions 1-16 are enriched in basic and acidic residues; it reads MSESGIKKLSQERTRE. Residues 1–38 form a disordered region; sequence MSESGIKKLSQERTREWLASQEDEELESIAESSVVDSL. Residues N52, N95, N98, and N106 are each glycosylated (N-linked (GlcNAc...) asparagine). A disordered region spans residues 124 to 152; it reads NRRDRRHVSPPRDNAPKTPTHFEDDYQDE. Residues 198–324 enclose the N-acetylmuramoyl-L-alanine amidase domain; it reads PVKYVVILHT…CQCNSTESPG (127 aa). Residues H206, 229-240, R254, 261-267, and 314-322 contribute to the peptidoglycan site; these read HIESRGWNDIAY, AHTLGYN, and HCQCNSTES. Residue N318 is glycosylated (N-linked (GlcNAc...) asparagine).

The protein belongs to the N-acetylmuramoyl-L-alanine amidase 2 family. As to quaternary structure, monomer. Peptidoglycan binding induces oligomerization. Expressed in hemolymph. Localizes at the lumenal surface of the trachea (at protein level).

It is found in the secreted. In terms of biological role, peptidoglycan-recognition protein that plays a key role in innate immunity by binding to murein peptidoglycans (PGN) of Gram-negative bacteria and activating the imd/Relish pathway. Has no activity against on Gram-positive bacteria. Binds to diaminopimelic acid-type PGN (DAP-type PGN), an activator of the imd/Relish pathway. Functions synergistically with PGRP-LC in producing resistance to E.coli and B.megaterium infections, which have the DAP-type peptidoglycan. Acts both upstream and in parallel with PGRP-LC in the imd/Relish pathway, and is required for infection-dependent activation of melanization. Required for Relish processing and nuclear translocation following proteolytic cleavage. Its localization suggests a role in the recognition and subsequent activation of the signaling at the first point of contact with invading bacteria. The protein is Peptidoglycan-recognition protein LE (PGRP-LE) of Drosophila melanogaster (Fruit fly).